Consider the following 610-residue polypeptide: Elongation factor 4 (610 aa).

One can recognise a tr-type G domain in the interval 11–193; it reads EKIRNFSIIA…QIVEKVPAPT (183 aa). Residues 23 to 28 and 140 to 143 each bind GTP; these read DHGKST and NKID.

Belongs to the TRAFAC class translation factor GTPase superfamily. Classic translation factor GTPase family. LepA subfamily.

The protein localises to the cell membrane. The catalysed reaction is GTP + H2O = GDP + phosphate + H(+). Functionally, required for accurate and efficient protein synthesis under certain stress conditions. May act as a fidelity factor of the translation reaction, by catalyzing a one-codon backward translocation of tRNAs on improperly translocated ribosomes. Back-translocation proceeds from a post-translocation (POST) complex to a pre-translocation (PRE) complex, thus giving elongation factor G a second chance to translocate the tRNAs correctly. Binds to ribosomes in a GTP-dependent manner. This Streptococcus pyogenes serotype M49 (strain NZ131) protein is Elongation factor 4.